Here is a 211-residue protein sequence, read N- to C-terminus: Outer-membrane lipoprotein carrier protein (211 aa).

A signal peptide spans 1-24 (MNTIKILIGLLGIFLFSLSGIVSA).

It belongs to the LolA family. In terms of assembly, monomer.

It localises to the periplasm. Functionally, participates in the translocation of lipoproteins from the inner membrane to the outer membrane. Only forms a complex with a lipoprotein if the residue after the N-terminal Cys is not an aspartate (The Asp acts as a targeting signal to indicate that the lipoprotein should stay in the inner membrane). In Coxiella burnetii (strain RSA 331 / Henzerling II), this protein is Outer-membrane lipoprotein carrier protein.